The sequence spans 258 residues: Imidazole glycerol phosphate synthase subunit HisF (258 aa).

Catalysis depends on residues D11 and D130.

This sequence belongs to the HisA/HisF family. In terms of assembly, heterodimer of HisH and HisF.

Its subcellular location is the cytoplasm. The catalysed reaction is 5-[(5-phospho-1-deoxy-D-ribulos-1-ylimino)methylamino]-1-(5-phospho-beta-D-ribosyl)imidazole-4-carboxamide + L-glutamine = D-erythro-1-(imidazol-4-yl)glycerol 3-phosphate + 5-amino-1-(5-phospho-beta-D-ribosyl)imidazole-4-carboxamide + L-glutamate + H(+). The protein operates within amino-acid biosynthesis; L-histidine biosynthesis; L-histidine from 5-phospho-alpha-D-ribose 1-diphosphate: step 5/9. Its function is as follows. IGPS catalyzes the conversion of PRFAR and glutamine to IGP, AICAR and glutamate. The HisF subunit catalyzes the cyclization activity that produces IGP and AICAR from PRFAR using the ammonia provided by the HisH subunit. This is Imidazole glycerol phosphate synthase subunit HisF from Buchnera aphidicola subsp. Baizongia pistaciae (strain Bp).